The sequence spans 517 residues: DNA-binding protein Ikaros (517 aa).

The tract at residues 1-71 is disordered; that stretch reads MDVDEGQDMS…QSDEENGRAC (71 aa). Serine 13 carries the phosphoserine modification. At threonine 23 the chain carries Phosphothreonine. A compositionally biased stretch (polar residues) spans 37 to 47; the sequence is LSTTSGAQQNS. Lysine 58 participates in a covalent cross-link: Glycyl lysine isopeptide (Lys-Gly) (interchain with G-Cter in SUMO). Phosphoserine is present on residues serine 63 and serine 101. Residues 117-139 form a C2H2-type 1 zinc finger; that stretch reads LKCDICGIVCIGPNVLMVHKRSH. A Phosphothreonine modification is found at threonine 140. The C2H2-type 2 zinc finger occupies 144–166; the sequence is FQCNQCGASFTQKGNLLRHIKLH. The tract at residues 153 to 162 is required for both high-affinity DNA binding and pericentromeric heterochromatin localization; sequence FTQKGNLLRH. At serine 167 the chain carries Phosphoserine. A C2H2-type 3 zinc finger spans residues 172–194; sequence FKCHLCNYACRRRDALTGHLRTH. The segment at 179–194 is required for both high-affinity DNA binding and pericentromeric heterochromatin localization; it reads YACRRRDALTGHLRTH. At serine 195 the chain carries Phosphoserine. Residues 200 to 223 form a C2H2-type 4 zinc finger; the sequence is HKCGYCGRSYKQRSSLEEHKERCH. Lysine 239 is covalently cross-linked (Glycyl lysine isopeptide (Lys-Gly) (interchain with G-Cter in SUMO)). Serine 259, serine 287, serine 293, serine 357, serine 360, serine 384, serine 386, serine 388, and serine 392 each carry phosphoserine. Positions 376–400 are disordered; the sequence is SVSSEREASPSNSCQDSTDTESNAE. Residue threonine 393 is modified to Phosphothreonine. 2 positions are modified to phosphoserine: serine 397 and serine 440. 2 C2H2-type zinc fingers span residues 457 to 479 and 488 to 512; these read YKCE…MGCH and FECN…RGEH. The interval 463-466 is required for binding PP1CC; it reads RVLF.

The protein belongs to the Ikaros C2H2-type zinc-finger protein family. As to quaternary structure, heterodimer with other IKAROS family members. Interacts with IKZF4 and IKZF5. Component of the chromatin-remodeling NuRD repressor complex which includes at least HDAC1, HDAC2, RBBP4, RBBP7, IKZF1, MTA2, MBD2, MBD3, MTA1L1, CHD3 and CHD4. Interacts directly with the CHD4 component of the NuRD complex. Interacts directly with SMARCA4; the interaction associates IKFZ1 with the BAF complex. Interacts with SUMO1; the interaction sumoylates IKAROS, promoted by PIAS2 and PIAS3. Interacts with PIAS2 (isoform alpha); the interaction promotes sumoylation and reduces transcription repression. Interacts, to a lesser extent, with PIAS3. Interacts with PPP1CC; the interaction targets PPP1CC to pericentromeric heterochromatin, dephosphorylates IKAROS, stabilizes it and prevents it from degradation. Interacts with IKZF3. Phosphorylation at Ser-357 and Ser-360 downstream of SYK induces nuclear translocation. Phosphorylation controls cell-cycle progression from late G(1) stage to S stage. Hyperphosphorylated during G2/M phase. Dephosphorylated state during late G(1) phase. Phosphorylation on Thr-140 is required for DNA and pericentromeric location during mitosis. CK2 is the main kinase, in vitro. GSK3 and CDK may also contribute to phosphorylation of the C-terminal serine and threonine residues. Phosphorylation on these C-terminal residues reduces the DNA-binding ability. Phosphorylation/dephosphorylation events on Ser-13 and Ser-293 regulate TDT expression during thymocyte differentiation. Dephosphorylation by protein phosphatase 1 regulates stability and pericentromeric heterochromatin location. Phosphorylated in both lymphoid and non-lymphoid tissues. In terms of processing, sumoylated. Simultaneous sumoylation on the 2 sites results in a loss of both HDAC-dependent and HDAC-independent repression. Has no effect on pericentromeric heterochromatin location. Desumoylated by SENP1. Post-translationally, polyubiquitinated. In terms of tissue distribution, strongly expressed in T-cells and their progenitors,in B-cells, and in all early embryonic retinal progenitor cells (RPCs). Isoforms V and VI are the predominant isoforms in lymphocytes.

The protein localises to the nucleus. It is found in the cytoplasm. Its function is as follows. Transcription regulator of hematopoietic cell differentiation. Binds gamma-satellite DNA. Binds with higher affinity to gamma satellite A. Plays a role in the development of lymphocytes, B- and T-cells. Binds and activates the enhancer (delta-A element) of the CD3-delta gene. Repressor of the TDT (terminal deoxynucleotidyltransferase) gene during thymocyte differentiation. Regulates transcription through association with both HDAC-dependent and HDAC-independent complexes. Targets the 2 chromatin-remodeling complexes, NuRD and BAF (SWI/SNF), in a single complex (PYR complex), to the beta-globin locus in adult erythrocytes. Increases normal apoptosis in adult erythroid cells. Confers early temporal competence to retinal progenitor cells (RPCs). Function is isoform-specific and is modulated by dominant-negative inactive isoforms. This chain is DNA-binding protein Ikaros (Ikzf1), found in Mus musculus (Mouse).